The chain runs to 255 residues: tRNA (guanine-N(1)-)-methyltransferase (255 aa).

S-adenosyl-L-methionine is bound by residues G113 and 133–138 (IGDYVL).

It belongs to the RNA methyltransferase TrmD family. As to quaternary structure, homodimer.

Its subcellular location is the cytoplasm. The enzyme catalyses guanosine(37) in tRNA + S-adenosyl-L-methionine = N(1)-methylguanosine(37) in tRNA + S-adenosyl-L-homocysteine + H(+). Its function is as follows. Specifically methylates guanosine-37 in various tRNAs. This is tRNA (guanine-N(1)-)-methyltransferase from Escherichia coli O127:H6 (strain E2348/69 / EPEC).